The following is a 224-amino-acid chain: 3-dehydroquinate dehydratase (224 aa).

3-dehydroquinate is bound by residues 35–37 (EFR) and Arg-65. His-120 (proton donor/acceptor) is an active-site residue. Lys-146 serves as the catalytic Schiff-base intermediate with substrate. Positions 183, 202, and 206 each coordinate 3-dehydroquinate.

The protein belongs to the type-I 3-dehydroquinase family. In terms of assembly, homodimer.

The catalysed reaction is 3-dehydroquinate = 3-dehydroshikimate + H2O. Its pathway is metabolic intermediate biosynthesis; chorismate biosynthesis; chorismate from D-erythrose 4-phosphate and phosphoenolpyruvate: step 3/7. In terms of biological role, involved in the third step of the chorismate pathway, which leads to the biosynthesis of aromatic amino acids. Catalyzes the cis-dehydration of 3-dehydroquinate (DHQ) and introduces the first double bond of the aromatic ring to yield 3-dehydroshikimate. This chain is 3-dehydroquinate dehydratase, found in Methanobrevibacter smithii (strain ATCC 35061 / DSM 861 / OCM 144 / PS).